The primary structure comprises 597 residues: Chaperonin 60 subunit beta 3, chloroplastic (597 aa).

A disordered region spans residues 1 to 20; the sequence is MASTFSATSSMGSSLAPPSN. Residues 1-29 constitute a chloroplast transit peptide; it reads MASTFSATSSMGSSLAPPSNRLSSFVSIS. Phosphoserine occurs at positions 97 and 474. A coiled-coil region spans residues 387-489; that stretch reads STEEVVKKRV…KETLANDEEK (103 aa).

It belongs to the chaperonin (HSP60) family. As to quaternary structure, part of the Cpn60 complex composed of 7 alpha and 7 beta subunits. Can also form a complex composed of 14 beta subunits only. Both complexes show ATPase activity. The Cpn60 complex interacts with the Cpn10 complex.

It localises to the plastid. It is found in the chloroplast. Its function is as follows. Involved in protein assisted folding. The polypeptide is Chaperonin 60 subunit beta 3, chloroplastic (CPN60B3) (Arabidopsis thaliana (Mouse-ear cress)).